A 557-amino-acid chain; its full sequence is MSNPRHNEREVRSPRGDELNAKSWLTEAPLRMLMNNLDPDVAERPHELVVYGGIGRAARTWDDFDRIVATLKTLNDNETLLVQSGKPVGVFRTHKDAPRVLIANSNLVPHWANWDHFNELDKKGLAMYGQMTAGSWIYIGAQGIVQGTYETFVEAGRQHYGGNLKGRWILTGGLGGMGGAQPLAAVMAGACCLAVECDETRADFRLRTRYVDEKTHSLDEALAKIDAWTKAGEAKSIALIGNAAEIFPELVKRGVKPDIVTDQTSAHDPVHGYLPLGWTVAEWRAKQENDPKAVEKAARASMKVQVQAMLDFWNAGIPTVDYGNNIRQMALEEGLENAFAFPGFVPAYIRPLFCRGIGPYRWAALSGDPEDIAKTDAKVKELLPDNKHLHNWLDMAKERIAFQGLPARICWVGLGDRHRLGLAFNEMVRNGELKAPIVIGRDHLDSGSVASPNRETEAMKDGSDAVSDWPLLNALLNTASGATWVSLHHGGGVGMGFSQHAGMVICCDGTEDADRRLERVLWNDPATGVMRHADAGYDIALDWARKQGLRLPAILGN.

The interval 1-20 (MSNPRHNEREVRSPRGDELN) is disordered. NAD(+)-binding positions include 52–53 (GG), Gln-130, 176–178 (GMG), Glu-196, Arg-201, 242–243 (NA), 263–267 (QTSAH), 273–274 (YL), and Tyr-322. Cys-410 is an active-site residue. Gly-492 lines the NAD(+) pocket.

It belongs to the urocanase family. NAD(+) serves as cofactor.

It is found in the cytoplasm. It carries out the reaction 4-imidazolone-5-propanoate = trans-urocanate + H2O. The protein operates within amino-acid degradation; L-histidine degradation into L-glutamate; N-formimidoyl-L-glutamate from L-histidine: step 2/3. In terms of biological role, catalyzes the conversion of urocanate to 4-imidazolone-5-propionate. The polypeptide is Urocanate hydratase (Brucella abortus (strain S19)).